The following is a 321-amino-acid chain: Isoaspartyl peptidase (321 aa).

The Nucleophile role is filled by T179. Substrate is bound by residues 207-210 (RVGD) and 230-233 (TGTG).

Belongs to the Ntn-hydrolase family. In terms of assembly, heterotetramer of two alpha and two beta chains arranged as a dimer of alpha/beta heterodimers. In terms of processing, autocleaved. Generates the alpha and beta subunits. The N-terminal residue of the beta subunit is thought to be responsible for the nucleophile hydrolase activity. Both subunits undergo further processing at their C-termini. The overexpressed alpha subunit seems to consist of residues 2-161, with an oxidized Met residue and a tightly coordinated Na(+), whereas the overexpressed beta subunit is processed to residue 315 and has 3 oxidized Met residues. Processing of the alpha subunit is inhibited by Zn(2+).

It catalyses the reaction Cleavage of a beta-linked Asp residue from the N-terminus of a polypeptide.. In terms of biological role, degrades proteins damaged by L-isoaspartyl residue formation (also known as beta-Asp residues). Degrades L-isoaspartyl-containing di- and maybe also tripeptides. Also has L-asparaginase activity, although this may not be its principal function. Its function is as follows. May be involved in glutathione, and possibly other peptide, transport, although these results could also be due to polar effects of disruption. The sequence is that of Isoaspartyl peptidase (iaaA) from Escherichia coli (strain K12).